A 365-amino-acid polypeptide reads, in one-letter code: Isoflavone 4'-O-methyltransferase (365 aa).

S-adenosyl-L-methionine contacts are provided by residues 207-210 (VAGG), Asp231, 231-232 (DQ), 251-252 (DM), and Lys265. His269 acts as the Proton acceptor in catalysis.

The protein belongs to the class I-like SAM-binding methyltransferase superfamily. Cation-independent O-methyltransferase family. COMT subfamily.

It catalyses the reaction a 4'-hydroxyisoflavone + S-adenosyl-L-methionine = a 4'-methoxyisoflavone + S-adenosyl-L-homocysteine + H(+). The catalysed reaction is (2R,3S)-2,4',7-trihydroxyisoflavanone + S-adenosyl-L-methionine = (2R,3S)-2,7-dihydroxy-4'-methoxyisoflavanone + S-adenosyl-L-homocysteine + H(+). 2-hydroxyisoflavanone 4'-O-methyltransferase involved in the biosynthesis of formononetin. Can use 2,7,4'-trihydroxyisoflavanone as substrate, but not daidzein. The protein is Isoflavone 4'-O-methyltransferase (HI4'OMT) of Lotus japonicus (Lotus corniculatus var. japonicus).